A 132-amino-acid chain; its full sequence is Large ribosomal subunit protein uL14 (132 aa).

It belongs to the universal ribosomal protein uL14 family. As to quaternary structure, part of the 50S ribosomal subunit. Forms a cluster with proteins L3 and L24e, part of which may contact the 16S rRNA in 2 intersubunit bridges.

Its function is as follows. Binds to 23S rRNA. Forms part of two intersubunit bridges in the 70S ribosome. The protein is Large ribosomal subunit protein uL14 of Halorubrum lacusprofundi (strain ATCC 49239 / DSM 5036 / JCM 8891 / ACAM 34).